The following is a 159-amino-acid chain: MNILIDNRQDKVDAINLEELVEKVIKTVLEVEEVIDNVEVSVSFVDNEEIRKLNKYYRGIDKPTDVLSFPLAEFEDTYGEVEEIEEDSEEVQPIGDIVISLEKALEQSMEYGHSFEREVAYLTAHSMLHLLGYDHETEEERKIMREKEEEVMARLNIGR.

The Zn(2+) site is built by H125, H129, and H135.

Belongs to the endoribonuclease YbeY family. Zn(2+) serves as cofactor.

It is found in the cytoplasm. Single strand-specific metallo-endoribonuclease involved in late-stage 70S ribosome quality control and in maturation of the 3' terminus of the 16S rRNA. The sequence is that of Endoribonuclease YbeY from Thermoanaerobacter pseudethanolicus (strain ATCC 33223 / 39E) (Clostridium thermohydrosulfuricum).